We begin with the raw amino-acid sequence, 66 residues long: UPF0337 protein BP1738 (66 aa).

The protein belongs to the UPF0337 (CsbD) family.

The protein is UPF0337 protein BP1738 of Bordetella pertussis (strain Tohama I / ATCC BAA-589 / NCTC 13251).